We begin with the raw amino-acid sequence, 176 residues long: Cathelicidin-2 (176 aa).

An N-terminal signal peptide occupies residues 1-29 (METQGASLSLGRWSLWLLLLGLVLPSASA). Q30 bears the Pyrrolidone carboxylic acid mark. Positions 30 to 130 (QALSYREAVL…DINCNELQSV (101 aa)) are excised as a propeptide. 2 disulfide bridges follow: C85-C96 and C107-C124. The disordered stretch occupies residues 135–176 (PIRRPPIRPPFRPPFRPPVRPPIRPPFRPPFRPPIGPFPGRR). Residues 141 to 176 (IRPPFRPPFRPPVRPPIRPPFRPPFRPPIGPFPGRR) show a composition bias toward pro residues. Residue P173 is modified to Proline amide. A propeptide spans 174–176 (GRR) (removed in mature form).

Belongs to the cathelicidin family. Post-translationally, elastase is responsible for its maturation.

It localises to the secreted. Binds to the lipid A moiety of bacterial lipipolysaccharides (LPS), a glycolipid present in the outer membrane of all Gram-negative bacteria. Potent antimicrobial activity. The chain is Cathelicidin-2 (CATHL2) from Ovis aries (Sheep).